The sequence spans 354 residues: Uroporphyrinogen decarboxylase (354 aa).

Substrate contacts are provided by residues 27-31 (RQAGR), Asp-77, Tyr-154, Ser-209, and His-327.

This sequence belongs to the uroporphyrinogen decarboxylase family. Homodimer.

Its subcellular location is the cytoplasm. It carries out the reaction uroporphyrinogen III + 4 H(+) = coproporphyrinogen III + 4 CO2. The protein operates within porphyrin-containing compound metabolism; protoporphyrin-IX biosynthesis; coproporphyrinogen-III from 5-aminolevulinate: step 4/4. In terms of biological role, catalyzes the decarboxylation of four acetate groups of uroporphyrinogen-III to yield coproporphyrinogen-III. This is Uroporphyrinogen decarboxylase from Pseudomonas syringae pv. syringae (strain B728a).